Here is a 321-residue protein sequence, read N- to C-terminus: Phosphopantothenate--cysteine ligase 1 (321 aa).

This sequence belongs to the PPC synthetase family. In terms of assembly, homodimer.

It catalyses the reaction (R)-4'-phosphopantothenate + L-cysteine + CTP = N-[(R)-4-phosphopantothenoyl]-L-cysteine + CMP + diphosphate + H(+). The protein operates within cofactor biosynthesis; coenzyme A biosynthesis; CoA from (R)-pantothenate: step 2/5. Its function is as follows. Catalyzes the first step in the biosynthesis of coenzyme A from vitamin B5, where cysteine is conjugated to 4'-phosphopantothenate to form 4-phosphopantothenoylcysteine. The polypeptide is Phosphopantothenate--cysteine ligase 1 (Oryza sativa subsp. japonica (Rice)).